A 373-amino-acid polypeptide reads, in one-letter code: MFSKSLEALHHVKRYRKRELFDPLLKDYASNDYLGLSVKKDLLQNAFDKLQSFDCHSPKASMLVNGYHPLHAELEERLADLLEFESALLVGSGFLGNLALIDTLLVKNALLFMDAHYHASGIFSTKIKPNQVIFFSHNDIKDLKQKLFNAPKNKLKFIAIEGVYSMDASIAPYDFYEIIQETPNAFLIVDEAHSFGTIGENLLGFLEYHRIKEKDKIIKLSTFSKALASYGACVLAPLQVIEFLTNRAKSVIYTTALSLLDTALTLAHLEYFIAQKQELKNELSKHQQIIFETLGVRTPTGFFTLEFENNPALLNAQYFLKEKGFLVGAIRPPTVSKPLLRVSLSLKNSLEDTKELANALLDYSKIQSSFKSG.

Arg-16 provides a ligand contact to substrate. 93 to 94 (GF) contributes to the pyridoxal 5'-phosphate binding site. His-118 is a binding site for substrate. Residues Ser-165, 190-193 (DEAH), and 222-225 (TFSK) contribute to the pyridoxal 5'-phosphate site. The residue at position 225 (Lys-225) is an N6-(pyridoxal phosphate)lysine. Thr-334 provides a ligand contact to substrate.

Belongs to the class-II pyridoxal-phosphate-dependent aminotransferase family. BioF subfamily. As to quaternary structure, homodimer. Requires pyridoxal 5'-phosphate as cofactor.

The enzyme catalyses 6-carboxyhexanoyl-[ACP] + L-alanine + H(+) = (8S)-8-amino-7-oxononanoate + holo-[ACP] + CO2. The protein operates within cofactor biosynthesis; biotin biosynthesis. Its function is as follows. Catalyzes the decarboxylative condensation of pimeloyl-[acyl-carrier protein] and L-alanine to produce 8-amino-7-oxononanoate (AON), [acyl-carrier protein], and carbon dioxide. The chain is 8-amino-7-oxononanoate synthase from Helicobacter pylori (strain J99 / ATCC 700824) (Campylobacter pylori J99).